Consider the following 155-residue polypeptide: Ribonuclease H (155 aa).

An RNase H type-1 domain is found at 1–142 (MLKQVEIFTD…CDELARAAAM (142 aa)). Positions 10, 48, 70, and 134 each coordinate Mg(2+).

It belongs to the RNase H family. In terms of assembly, monomer. Mg(2+) is required as a cofactor.

Its subcellular location is the cytoplasm. The catalysed reaction is Endonucleolytic cleavage to 5'-phosphomonoester.. Endonuclease that specifically degrades the RNA of RNA-DNA hybrids. The chain is Ribonuclease H from Escherichia fergusonii (strain ATCC 35469 / DSM 13698 / CCUG 18766 / IAM 14443 / JCM 21226 / LMG 7866 / NBRC 102419 / NCTC 12128 / CDC 0568-73).